A 240-amino-acid chain; its full sequence is tRNA (guanine-N(1)-)-methyltransferase (240 aa).

Residues glycine 108 and isoleucine 127–leucine 132 contribute to the S-adenosyl-L-methionine site.

This sequence belongs to the RNA methyltransferase TrmD family. In terms of assembly, homodimer.

The protein resides in the cytoplasm. The catalysed reaction is guanosine(37) in tRNA + S-adenosyl-L-methionine = N(1)-methylguanosine(37) in tRNA + S-adenosyl-L-homocysteine + H(+). Functionally, specifically methylates guanosine-37 in various tRNAs. The chain is tRNA (guanine-N(1)-)-methyltransferase from Lactobacillus johnsonii (strain CNCM I-12250 / La1 / NCC 533).